The primary structure comprises 103 residues: Large ribosomal subunit protein uL24 (103 aa).

The protein belongs to the universal ribosomal protein uL24 family. As to quaternary structure, part of the 50S ribosomal subunit.

Functionally, one of two assembly initiator proteins, it binds directly to the 5'-end of the 23S rRNA, where it nucleates assembly of the 50S subunit. In terms of biological role, one of the proteins that surrounds the polypeptide exit tunnel on the outside of the subunit. The polypeptide is Large ribosomal subunit protein uL24 (Lacticaseibacillus casei (strain BL23) (Lactobacillus casei)).